The chain runs to 485 residues: UDP-N-acetylmuramate--L-alanine ligase (485 aa).

120–126 contributes to the ATP binding site; sequence GSHGKTT.

It belongs to the MurCDEF family.

It is found in the cytoplasm. It catalyses the reaction UDP-N-acetyl-alpha-D-muramate + L-alanine + ATP = UDP-N-acetyl-alpha-D-muramoyl-L-alanine + ADP + phosphate + H(+). It participates in cell wall biogenesis; peptidoglycan biosynthesis. Functionally, cell wall formation. In Rickettsia rickettsii (strain Iowa), this protein is UDP-N-acetylmuramate--L-alanine ligase.